The sequence spans 522 residues: Amphoterin-induced protein 2 (522 aa).

A signal peptide spans 1-39 (MSLRVHTLPTLLGAVVRPGCRELLCLLMITVAVGPGASG). Residues 40 to 68 (VCPTACICATDIVSCTNKHLSKVPGNLFR) enclose the LRRNT domain. Over 40-398 (VCPTACICAT…RSHAHEAFNT (359 aa)) the chain is Extracellular. Disulfide bonds link Cys41–Cys47 and Cys45–Cys54. 6 LRR repeats span residues 69 to 90 (LMKRLDLSYNRIGLLDSEWIPV), 94 to 115 (KLNTLILRHNNITSISTGSFST), 118 to 139 (NLKCLDLSSNKLKTVKNAVFQE), 142 to 163 (VLEVLLLYNNHISYLDPSAFGG), 166 to 187 (QLQKLYLSGNFLTQFPMDLYVG), and 193 to 214 (ELMFLDVSYNRIPSMPMHHINL). An N-linked (GlcNAc...) asparagine glycan is attached at Asn104. The 57-residue stretch at 228 to 284 (NPFVCDCSLYSLLVFWYRRHFSSVMDFKNDYTCRLWSDSRHSRQVLLLQDSFMNCSD) folds into the LRRCT domain. 2 disulfide bridges follow: Cys232/Cys260 and Cys234/Cys282. N-linked (GlcNAc...) asparagine glycosylation is found at Asn281, Asn288, Asn345, Asn373, Asn381, and Asn384. One can recognise an Ig-like C2-type domain in the interval 289–379 (GSFRALGFIH…RLLNETVDVT (91 aa)). Cys310 and Cys363 are oxidised to a cystine. A helical transmembrane segment spans residues 399-419 (AFTTLAACVASIVLVLLYLYL). The Cytoplasmic portion of the chain corresponds to 420 to 522 (TPCPCKCKTK…FSDTPFVAST (103 aa)). The segment at 501–522 (RGKSDSDSVNSVFSDTPFVAST) is disordered.

Belongs to the immunoglobulin superfamily. AMIGO family. As to quaternary structure, binds itself as well as AMIGO1 and AMIGO3.

Its subcellular location is the cell membrane. It is found in the nucleus. Its function is as follows. Required for depolarization-dependent survival of cultured cerebellar granule neurons. May mediate homophilic as well as heterophilic cell-cell interaction with AMIGO1 or AMIGO3. May contribute to signal transduction through its intracellular domain. This Pongo abelii (Sumatran orangutan) protein is Amphoterin-induced protein 2.